We begin with the raw amino-acid sequence, 557 residues long: Potassium-transporting ATPase potassium-binding subunit (557 aa).

10 helical membrane-spanning segments follow: residues 4–24, 61–81, 131–151, 174–194, 253–273, 280–300, 375–395, 412–432, 483–503, and 528–548; these read LGAG…VHVP, TYAL…YAFL, GLTV…VALV, LRVL…TGVV, LEVF…GTLV, LAVL…TTWA, GLYG…LMVG, CAAL…AVAL, LAIW…AGAF, and LAVV…LGPI.

The protein belongs to the KdpA family. In terms of assembly, the system is composed of three essential subunits: KdpA, KdpB and KdpC.

The protein localises to the cell membrane. Its function is as follows. Part of the high-affinity ATP-driven potassium transport (or Kdp) system, which catalyzes the hydrolysis of ATP coupled with the electrogenic transport of potassium into the cytoplasm. This subunit binds the extracellular potassium ions and delivers the ions to the membrane domain of KdpB through an intramembrane tunnel. This chain is Potassium-transporting ATPase potassium-binding subunit, found in Kineococcus radiotolerans (strain ATCC BAA-149 / DSM 14245 / SRS30216).